The following is a 527-amino-acid chain: Berberine bridge enzyme-like 10 (527 aa).

A signal peptide spans 1–20; sequence MEKLLVISLLLLISTSVTTS. Residues cysteine 32 and cysteine 95 are joined by a disulfide bond. N-linked (GlcNAc...) asparagine glycosylation occurs at asparagine 53. One can recognise an FAD-binding PCMH-type domain in the interval 73 to 248; it reads TTPKPISVVA…LGYKIQLVPV (176 aa). Histidine 110 carries the pros-8alpha-FAD histidine modification. Residues asparagine 137 and asparagine 293 are each glycosylated (N-linked (GlcNAc...) asparagine).

This sequence belongs to the oxygen-dependent FAD-linked oxidoreductase family. The cofactor is FAD.

The protein localises to the secreted. It is found in the cell wall. The chain is Berberine bridge enzyme-like 10 from Arabidopsis thaliana (Mouse-ear cress).